The chain runs to 422 residues: Glycine amidinotransferase, mitochondrial (422 aa).

Residues 1-37 (MLRVRCVRGGSRGAEAVHYIGSMLRKGFVGWVQRSFQ) constitute a mitochondrion transit peptide. Active-site residues include D253 and H302. The active-site Amidino-cysteine intermediate is C406.

This sequence belongs to the amidinotransferase family. As to quaternary structure, homodimer.

The protein resides in the mitochondrion inner membrane. The enzyme catalyses L-arginine + glycine = guanidinoacetate + L-ornithine. It functions in the pathway amine and polyamine biosynthesis; creatine biosynthesis; creatine from L-arginine and glycine: step 1/2. In terms of biological role, catalyzes the biosynthesis of guanidinoacetate, the immediate precursor of creatine. Creatine plays a vital role in energy metabolism in muscle tissues. May play a role in embryonic and central nervous system development. This chain is Glycine amidinotransferase, mitochondrial, found in Xenopus tropicalis (Western clawed frog).